The following is a 243-amino-acid chain: PHO85 cyclin-like protein psl1 (243 aa).

Residues 211-224 (ESPISHTPQQNQQD) are compositionally biased toward polar residues. The segment at 211–231 (ESPISHTPQQNQQDEQPRRPI) is disordered.

Belongs to the cyclin family. PHO80 subfamily. Forms a cyclin-CDK complex with pef1.

Its subcellular location is the cytoplasm. It is found in the nucleus. Cyclin partner of the cyclin-dependent kinase (CDK) pef1 (PHO85 homolog). In Schizosaccharomyces pombe (strain 972 / ATCC 24843) (Fission yeast), this protein is PHO85 cyclin-like protein psl1 (psl1).